The primary structure comprises 1030 residues: Carbamoyl phosphate synthase arginine-specific large chain (1030 aa).

The segment at 1 to 401 (MPKDTSISSI…AIQKAAASLE (401 aa)) is carboxyphosphate synthetic domain. The ATP site is built by R129, R169, G175, G176, K208, I210, E215, G241, V242, H243, Q284, and E298. In terms of domain architecture, ATP-grasp 1 spans 133–327 (RSLMNELKQP…IAKMAAKLAV (195 aa)). Mg(2+)-binding residues include Q284, E298, and N300. The Mn(2+) site is built by Q284, E298, and N300. The interval 402–548 (LKNIGTHLPE…YSTYFGETDG (147 aa)) is oligomerization domain. The carbamoyl phosphate synthetic domain stretch occupies residues 549–928 (DISRKEKKRA…ALKKIYTRVW (380 aa)). In terms of domain architecture, ATP-grasp 2 spans 675-863 (YQLLDELGLK…MIPLATRLLA (189 aa)). ATP-binding residues include R711, Q748, V750, E754, G779, V780, H781, S782, Q822, and E834. Residues Q822, E834, and N836 each coordinate Mg(2+). The Mn(2+) site is built by Q822, E834, and N836. The 103-residue stretch at 925 to 1027 (TRVWSQKGSI…KDLYKKEVAS (103 aa)) folds into the MGS-like domain. The allosteric domain stretch occupies residues 929–1030 (SQKGSIYLQN…YKKEVASCTQ (102 aa)).

Belongs to the CarB family. As to quaternary structure, composed of two chains; the small (or glutamine) chain promotes the hydrolysis of glutamine to ammonia, which is used by the large (or ammonia) chain to synthesize carbamoyl phosphate. Tetramer of heterodimers (alpha,beta)4. Mg(2+) serves as cofactor. Requires Mn(2+) as cofactor.

It carries out the reaction hydrogencarbonate + L-glutamine + 2 ATP + H2O = carbamoyl phosphate + L-glutamate + 2 ADP + phosphate + 2 H(+). It catalyses the reaction hydrogencarbonate + NH4(+) + 2 ATP = carbamoyl phosphate + 2 ADP + phosphate + 2 H(+). Its pathway is amino-acid biosynthesis; L-arginine biosynthesis; carbamoyl phosphate from bicarbonate: step 1/1. Large subunit of the glutamine-dependent carbamoyl phosphate synthetase (CPSase). CPSase catalyzes the formation of carbamoyl phosphate from the ammonia moiety of glutamine, carbonate, and phosphate donated by ATP, constituting the first step of the biosynthetic pathway leading to arginine and/or urea. The large subunit (synthetase) binds the substrates ammonia (free or transferred from glutamine from the small subunit), hydrogencarbonate and ATP and carries out an ATP-coupled ligase reaction, activating hydrogencarbonate by forming carboxy phosphate which reacts with ammonia to form carbamoyl phosphate. This chain is Carbamoyl phosphate synthase arginine-specific large chain, found in Bacillus subtilis (strain 168).